Here is a 334-residue protein sequence, read N- to C-terminus: Trans-O-hydroxybenzylidenepyruvate hydratase-aldolase (334 aa).

This sequence belongs to the DapA family.

The enzyme catalyses (3E)-4-(2-hydroxyphenyl)-2-oxobut-3-enoate + H2O = salicylaldehyde + pyruvate. It functions in the pathway aromatic compound metabolism; naphthalene degradation. In terms of biological role, involved in the naphthalene upper catabolic pathway. Catalyzes the transformation of trans-O-hydroxybenzylidenepyruvate (THBPA) to salicylaldehyde and pyruvate. The reaction is reversible. The sequence is that of Trans-O-hydroxybenzylidenepyruvate hydratase-aldolase (pahE) from Pseudomonas aeruginosa.